Here is a 546-residue protein sequence, read N- to C-terminus: Chaperonin GroEL (546 aa).

ATP is bound by residues 30-33 (TLGP), K51, 87-91 (DGTTT), G415, and D497. The disordered stretch occupies residues 527–546 (PKKDSPAPAMPGGGMGGMDF). Residues 537-546 (PGGGMGGMDF) are compositionally biased toward gly residues.

This sequence belongs to the chaperonin (HSP60) family. In terms of assembly, forms a cylinder of 14 subunits composed of two heptameric rings stacked back-to-back. Interacts with the co-chaperonin GroES.

Its subcellular location is the cytoplasm. The enzyme catalyses ATP + H2O + a folded polypeptide = ADP + phosphate + an unfolded polypeptide.. Its function is as follows. Together with its co-chaperonin GroES, plays an essential role in assisting protein folding. The GroEL-GroES system forms a nano-cage that allows encapsulation of the non-native substrate proteins and provides a physical environment optimized to promote and accelerate protein folding. This Methylobacterium radiotolerans (strain ATCC 27329 / DSM 1819 / JCM 2831 / NBRC 15690 / NCIMB 10815 / 0-1) protein is Chaperonin GroEL.